Here is a 589-residue protein sequence, read N- to C-terminus: Probable arginine--tRNA ligase, cytoplasmic (589 aa).

Residues 121–123 (SPN), His132, Tyr332, Asp336, and Gln360 contribute to the L-arginine site. A 'HIGH' region motif is present at residues 121 to 132 (SPNIAKPFHAGH). The interaction with tRNA stretch occupies residues 469 to 483 (DTGPYLQYAHARLCS).

The protein belongs to the class-I aminoacyl-tRNA synthetase family.

The protein localises to the cytoplasm. Its subcellular location is the cytosol. It carries out the reaction tRNA(Arg) + L-arginine + ATP = L-arginyl-tRNA(Arg) + AMP + diphosphate. Forms part of a macromolecular complex that catalyzes the attachment of specific amino acids to cognate tRNAs during protein synthesis. This is Probable arginine--tRNA ligase, cytoplasmic (argS1) from Dictyostelium discoideum (Social amoeba).